The sequence spans 113 residues: UPF0102 protein Ccon26_01140 (113 aa).

This sequence belongs to the UPF0102 family.

The protein is UPF0102 protein Ccon26_01140 of Campylobacter concisus (strain 13826).